The sequence spans 277 residues: Large ribosomal subunit protein uL2c (277 aa).

A disordered region spans residues 228-254 (VDHPHGGGEGRCPVGHAQPRTPWGKPA).

This sequence belongs to the universal ribosomal protein uL2 family. As to quaternary structure, part of the 50S ribosomal subunit.

It localises to the plastid. The protein localises to the chloroplast. The sequence is that of Large ribosomal subunit protein uL2c (rpl2) from Ostreococcus tauri.